The chain runs to 153 residues: Superoxide dismutase [Cu-Zn] (153 aa).

Cu cation-binding residues include His45, His47, and His62. A disulfide bridge connects residues Cys56 and Cys145. Positions 62, 70, 79, and 82 each coordinate Zn(2+). His119 contributes to the Cu cation binding site.

It belongs to the Cu-Zn superoxide dismutase family. Homodimer. The cofactor is Cu cation. Zn(2+) serves as cofactor.

The protein resides in the cytoplasm. The enzyme catalyses 2 superoxide + 2 H(+) = H2O2 + O2. Destroys radicals which are normally produced within the cells and which are toxic to biological systems. The sequence is that of Superoxide dismutase [Cu-Zn] from Drosophila orena (Fruit fly).